A 234-amino-acid polypeptide reads, in one-letter code: tRNA (guanine-N(1)-)-methyltransferase (234 aa).

S-adenosyl-L-methionine is bound by residues G115 and 135–140 (VGDYIL).

It belongs to the RNA methyltransferase TrmD family. Homodimer.

The protein localises to the cytoplasm. It carries out the reaction guanosine(37) in tRNA + S-adenosyl-L-methionine = N(1)-methylguanosine(37) in tRNA + S-adenosyl-L-homocysteine + H(+). Functionally, specifically methylates guanosine-37 in various tRNAs. This is tRNA (guanine-N(1)-)-methyltransferase from Rickettsia peacockii (strain Rustic).